The primary structure comprises 192 residues: Fe/S biogenesis protein NfuA (192 aa).

[4Fe-4S] cluster contacts are provided by C150 and C153.

It belongs to the NfuA family. In terms of assembly, homodimer. Requires [4Fe-4S] cluster as cofactor.

Its function is as follows. Involved in iron-sulfur cluster biogenesis. Binds a 4Fe-4S cluster, can transfer this cluster to apoproteins, and thereby intervenes in the maturation of Fe/S proteins. Could also act as a scaffold/chaperone for damaged Fe/S proteins. This chain is Fe/S biogenesis protein NfuA, found in Vesicomyosocius okutanii subsp. Calyptogena okutanii (strain HA).